Here is a 247-residue protein sequence, read N- to C-terminus: Carboxy-S-adenosyl-L-methionine synthase (247 aa).

Residues Y40, 65–67, 90–91, 122–123, N137, and R204 each bind S-adenosyl-L-methionine; these read GAS, DN, and DI.

This sequence belongs to the class I-like SAM-binding methyltransferase superfamily. Cx-SAM synthase family. In terms of assembly, homodimer.

The catalysed reaction is prephenate + S-adenosyl-L-methionine = carboxy-S-adenosyl-L-methionine + 3-phenylpyruvate + H2O. Functionally, catalyzes the conversion of S-adenosyl-L-methionine (SAM) to carboxy-S-adenosyl-L-methionine (Cx-SAM). The sequence is that of Carboxy-S-adenosyl-L-methionine synthase from Pseudomonas putida (strain ATCC 47054 / DSM 6125 / CFBP 8728 / NCIMB 11950 / KT2440).